The following is a 201-amino-acid chain: ATP-dependent Clp protease proteolytic subunit (201 aa).

Residue Ser-98 is the Nucleophile of the active site. His-123 is an active-site residue.

This sequence belongs to the peptidase S14 family. Fourteen ClpP subunits assemble into 2 heptameric rings which stack back to back to give a disk-like structure with a central cavity, resembling the structure of eukaryotic proteasomes.

It is found in the cytoplasm. It carries out the reaction Hydrolysis of proteins to small peptides in the presence of ATP and magnesium. alpha-casein is the usual test substrate. In the absence of ATP, only oligopeptides shorter than five residues are hydrolyzed (such as succinyl-Leu-Tyr-|-NHMec, and Leu-Tyr-Leu-|-Tyr-Trp, in which cleavage of the -Tyr-|-Leu- and -Tyr-|-Trp bonds also occurs).. Functionally, cleaves peptides in various proteins in a process that requires ATP hydrolysis. Has a chymotrypsin-like activity. Plays a major role in the degradation of misfolded proteins. The sequence is that of ATP-dependent Clp protease proteolytic subunit from Rickettsia conorii (strain ATCC VR-613 / Malish 7).